The following is a 406-amino-acid chain: 2,3-bisphosphoglycerate-independent phosphoglycerate mutase (406 aa).

It belongs to the BPG-independent phosphoglycerate mutase family. A-PGAM subfamily.

The catalysed reaction is (2R)-2-phosphoglycerate = (2R)-3-phosphoglycerate. The protein operates within carbohydrate degradation; glycolysis; pyruvate from D-glyceraldehyde 3-phosphate: step 3/5. Functionally, catalyzes the interconversion of 2-phosphoglycerate and 3-phosphoglycerate. This is 2,3-bisphosphoglycerate-independent phosphoglycerate mutase from Methanococcus maripaludis (strain C5 / ATCC BAA-1333).